Here is a 227-residue protein sequence, read N- to C-terminus: Mitochondrial cardiolipin hydrolase (227 aa).

The Mitochondrial intermembrane segment spans residues 1 to 14; that stretch reads MDVFKQMSFKELMK. The chain crosses the membrane as a helical span at residues 15-33; it reads VLGLGTVAFVLGVEWLNWL. The Cytoplasmic segment spans residues 34–227; it reads TRRLRDSRGP…LQSKNGQIKK (194 aa). The PLD phosphodiesterase domain maps to 153–180; the sequence is SAVHMHHKFALVDGRKLISGSLNWTLTA. Active-site residues include His158, Lys160, and Asp165.

It belongs to the phospholipase D family. MitoPLD/Zucchini subfamily. Homodimer.

The protein localises to the mitochondrion outer membrane. It catalyses the reaction a cardiolipin + H2O = a 1,2-diacyl-sn-glycero-3-phospho-(1'-sn-glycerol) + a 1,2-diacyl-sn-glycero-3-phosphate + H(+). Functionally, presents phospholipase and nuclease activities, depending on the different physiological conditions. Plays a key role in mitochondrial fusion and fission via its phospholipase activity. In its phospholipase role, it uses the mitochondrial lipid cardiolipin as substrate to generate phosphatidate (PA or 1,2-diacyl-sn-glycero-3-phosphate), a second messenger signaling lipid. Production of PA facilitates Mitofusin-mediated fusion, whereas the cleavage of PA by the Lipin family of phosphatases produces diacylgycerol (DAG) which promotes mitochondrial fission. Regulates mitochondrial shape through facilitating mitochondrial fusion. During spermatogenesis, plays a critical role in PIWI-interacting RNA (piRNA) biogenesis. piRNAs provide essential protection against the activity of mobile genetic elements. piRNA-mediated transposon silencing is thus critical for maintaining genome stability, in particular in germline cells when transposons are mobilized as a consequence of wide-spread genomic demethylation. Has been shown to be a backbone-non-specific, single strand-specific nuclease, cleaving either RNA or DNA substrates with similar affinity. Produces 5' phosphate and 3' hydroxyl termini, suggesting it could directly participate in the processing of primary piRNA transcripts. Has been proposed to act as a cardiolipin hydrolase to generate phosphatidic acid at mitochondrial surface. Although it cannot be excluded that it can act as a phospholipase in some circumstances, this activity could not be confirmed. The polypeptide is Mitochondrial cardiolipin hydrolase (pld6) (Danio rerio (Zebrafish)).